We begin with the raw amino-acid sequence, 602 residues long: Major facilitator superfamily multidrug transporter mfsB (602 aa).

12 consecutive transmembrane segments (helical) span residues 29-49 (FVLALCRICEPIAFMSIFPYV), 67-87 (LYAGLITSSFTFAEFSAGMFW), 98-118 (PVLIMGLIGTAISMIVFGFAP), 128-148 (ALGGLLNGNIGVLQTTVAEIV), 160-180 (IMPFVWCLGSIIGPAMGGALA), 201-221 (FLLPNLVCVVVLVFGVIVGFL), 329-349 (IVAYGILAYHSVSFDQLIPVF), 378-398 (FMLAVQGVYSMIAQLWLFPFV), 411-431 (VLLVWPPLYMLVPYLVLLPSI), 439-459 (LALISKITLHVIAFPSTAILL), 468-486 (VLGSINGAAASTASLSRAL), and 505-525 (IIAWWACGLVCVTGTIQSFWM). The interval 527–602 (ESEPRRDSEK…RSNPLAFAED (76 aa)) is disordered. Basic and acidic residues predominate over residues 528 to 538 (SEPRRDSEKAG).

This sequence belongs to the major facilitator superfamily.

It localises to the membrane. Functionally, major facilitator superfamily transporter that may be involved in A.fumigatus adaptation to azoles such as vorizonazole. The chain is Major facilitator superfamily multidrug transporter mfsB from Aspergillus fumigatus (strain ATCC MYA-4609 / CBS 101355 / FGSC A1100 / Af293) (Neosartorya fumigata).